We begin with the raw amino-acid sequence, 596 residues long: Elongation factor 4 (596 aa).

The tr-type G domain occupies 2–184; sequence KQIRNFSIIA…VIVAKIPPPE (183 aa). Residues 14–19 and 131–134 each bind GTP; these read DHGKST and NKID.

Belongs to the TRAFAC class translation factor GTPase superfamily. Classic translation factor GTPase family. LepA subfamily.

The protein resides in the cell inner membrane. The catalysed reaction is GTP + H2O = GDP + phosphate + H(+). Its function is as follows. Required for accurate and efficient protein synthesis under certain stress conditions. May act as a fidelity factor of the translation reaction, by catalyzing a one-codon backward translocation of tRNAs on improperly translocated ribosomes. Back-translocation proceeds from a post-translocation (POST) complex to a pre-translocation (PRE) complex, thus giving elongation factor G a second chance to translocate the tRNAs correctly. Binds to ribosomes in a GTP-dependent manner. This chain is Elongation factor 4, found in Shewanella baltica (strain OS223).